The chain runs to 474 residues: MKDTIVLYPNLGRGHLVSMVELGKLILTHHPSLSITILILTPPTTPSTTTTTLACDSNAQYIATVTATTPSITFHRVPLAALPFNTPFLPPHLLSLELTRHSTQNIAVALQTLAKASNLKAIVIDFMNFNDPKALTENLNNNVPTYFYYTSGASTLALLLYYPTIHPTLIEKKDTDQPLQIQIPGLSTITADDFPNECKDPLSYACQVFLQIAETMMGGAGIIVNTFEAIEEEAIRALSEDATVPPPLFCVGPVISAPYGEEDKGCLSWLNLQPSQSVVLLCFGSMGRFSRAQLKEIAIGLEKSEQRFLWVVRTELGGADDSAEELSLDELLPEGFLERTKEKGMVVRDWAPQAAILSHDSVGGFVTHCGWNSVLEAVCEGVPMVAWPLYAEQKMNRMVMVKEMKVALAVNENKDGFVSSTELGDRVRELMESDKGKEIRQRIFKMKMSAAEAMAEGGTSRASLDKLAKLWKQS.

Positions 1–49 (MKDTIVLYPNLGRGHLVSMVELGKLILTHHPSLSITILILTPPTTPSTT) are cleaved as a propeptide — removed in mature form. The active-site Proton acceptor is His-15. His-15 provides a ligand contact to an anthocyanidin. Asp-125 serves as the catalytic Charge relay. Thr-150, Ala-351, Gln-353, His-368, Trp-371, Asn-372, Ser-373, and Glu-376 together coordinate UDP-alpha-D-glucose. Ala-391 provides a ligand contact to an anthocyanidin. Positions 392 and 393 each coordinate UDP-alpha-D-glucose.

It belongs to the UDP-glycosyltransferase family. In terms of assembly, monomer. Expressed in shoots, leaves, cotyledons, epicotyls, hypocotyls, roots, pods, seeds and flowers.

It catalyses the reaction a 7-hydroxyisoflavone + UDP-alpha-D-glucose = a 7-hydroxyisoflavone 7-O-beta-D-glucoside + UDP + H(+). Its function is as follows. Involved in the biosynthesis of isoflavonoids. Specific for UDP-glucose. Can use genistein &gt; daidzein &gt; formononetin &gt; quercetin &gt; kaempferol &gt; 4,2',4',6'-tetrahydroxychalcone &gt; apigenin &gt; aureusidin &gt; esculetin &gt; naringenin as substrates, but not cyanidin, trans-p-coumaric acid, caffeic acid, benzoic acid, m- and p-hydroxybenzoic acids, salicylic acid, salicyl alcohol, and hydroquinone. The chain is Isoflavone 7-O-glucosyltransferase 1 (GmIF7GT1) from Glycine max (Soybean).